A 131-amino-acid chain; its full sequence is Profilin-1 (131 aa).

It belongs to the profilin family. As to quaternary structure, occurs in many kinds of cells as a complex with monomeric actin in a 1:1 ratio.

It localises to the cytoplasm. The protein resides in the cytoskeleton. In terms of biological role, binds to actin and affects the structure of the cytoskeleton. At high concentrations, profilin prevents the polymerization of actin, whereas it enhances it at low concentrations. By binding to PIP2, it inhibits the formation of IP3 and DG. The polypeptide is Profilin-1 (PRO1) (Hordeum vulgare (Barley)).